Consider the following 235-residue polypeptide: Leucyl/phenylalanyl-tRNA--protein transferase (235 aa).

Belongs to the L/F-transferase family.

The protein localises to the cytoplasm. It catalyses the reaction N-terminal L-lysyl-[protein] + L-leucyl-tRNA(Leu) = N-terminal L-leucyl-L-lysyl-[protein] + tRNA(Leu) + H(+). The catalysed reaction is N-terminal L-arginyl-[protein] + L-leucyl-tRNA(Leu) = N-terminal L-leucyl-L-arginyl-[protein] + tRNA(Leu) + H(+). It carries out the reaction L-phenylalanyl-tRNA(Phe) + an N-terminal L-alpha-aminoacyl-[protein] = an N-terminal L-phenylalanyl-L-alpha-aminoacyl-[protein] + tRNA(Phe). Its function is as follows. Functions in the N-end rule pathway of protein degradation where it conjugates Leu, Phe and, less efficiently, Met from aminoacyl-tRNAs to the N-termini of proteins containing an N-terminal arginine or lysine. This is Leucyl/phenylalanyl-tRNA--protein transferase from Azoarcus sp. (strain BH72).